A 75-amino-acid chain; its full sequence is Translational regulator CsrA (75 aa).

The protein belongs to the CsrA/RsmA family. Homodimer; the beta-strands of each monomer intercalate to form a hydrophobic core, while the alpha-helices form wings that extend away from the core.

It is found in the cytoplasm. A translational regulator that binds mRNA to regulate translation initiation and/or mRNA stability. Usually binds in the 5'-UTR at or near the Shine-Dalgarno sequence preventing ribosome-binding, thus repressing translation. Its main target seems to be the major flagellin gene, while its function is anatagonized by FliW. This is Translational regulator CsrA from Thermosipho melanesiensis (strain DSM 12029 / CIP 104789 / BI429).